Reading from the N-terminus, the 102-residue chain is Large ribosomal subunit protein bL21 (102 aa).

Residues 79–91 (RKDSKRKKGHRQP) show a composition bias toward basic residues. A disordered region spans residues 79 to 102 (RKDSKRKKGHRQPYTKLTIDKINA).

The protein belongs to the bacterial ribosomal protein bL21 family. In terms of assembly, part of the 50S ribosomal subunit. Contacts protein L20.

In terms of biological role, this protein binds to 23S rRNA in the presence of protein L20. This chain is Large ribosomal subunit protein bL21, found in Staphylococcus epidermidis (strain ATCC 35984 / DSM 28319 / BCRC 17069 / CCUG 31568 / BM 3577 / RP62A).